The primary structure comprises 439 residues: MLPQEIIRHKRDGHRLSAGEIAAFIGGVTSGAVTDGQAAAFAMAVFFNGMNRDEAVALTLAMRDSGDVLDWSDLPGPVTDKHSTGGVGDNVSLMLAPIVAACGAYVPMISGRGLGHTGGTLDKMDAIPGYISQPDIALFRQAVLETGCAIIGQTADLAPADRRLYAIRDVTGTVESVPLITASILSKKLAAGLGSLVLDVKVGNGAFMERSRDATALANSLVEVASGAGLKVSALITGMNEPLASAAGNAVEVHNAVDFLTGRLRDRRLEDVTLALAAEMLQSTGLVSSNQDGLRRATETLTSGRAAATFARMVAVLGGPADFIEKPEKYLAVAPTEFAVRATTDGFVTGIATRDIGLAVVGLGGGRTRPDDKIDPSVGITRLLPIGAEVHAGDALALVHARSPADAEAAAATVVSAYAIGASKPAADKTVMRRILPRG.

Belongs to the thymidine/pyrimidine-nucleoside phosphorylase family. As to quaternary structure, homodimer.

It carries out the reaction thymidine + phosphate = 2-deoxy-alpha-D-ribose 1-phosphate + thymine. It functions in the pathway pyrimidine metabolism; dTMP biosynthesis via salvage pathway; dTMP from thymine: step 1/2. The enzymes which catalyze the reversible phosphorolysis of pyrimidine nucleosides are involved in the degradation of these compounds and in their utilization as carbon and energy sources, or in the rescue of pyrimidine bases for nucleotide synthesis. In Mesorhizobium japonicum (strain LMG 29417 / CECT 9101 / MAFF 303099) (Mesorhizobium loti (strain MAFF 303099)), this protein is Thymidine phosphorylase.